The following is a 273-amino-acid chain: NAD-dependent protein deacylase (273 aa).

One can recognise a Deacetylase sirtuin-type domain in the interval 1-269; that stretch reads MNLDNAIHEA…PRIVEQVKKI (269 aa). NAD(+)-binding positions include 25–44 and 107–110; these read GAGV…GGVW and QNID. The active-site Proton acceptor is histidine 125. The Zn(2+) site is built by cysteine 133, cysteine 136, cysteine 173, and cysteine 176. Residues 211-213, 237-239, and threonine 255 each bind NAD(+); these read GTS and NPN.

Belongs to the sirtuin family. Class III subfamily. The cofactor is Zn(2+).

The protein localises to the cytoplasm. It carries out the reaction N(6)-acetyl-L-lysyl-[protein] + NAD(+) + H2O = 2''-O-acetyl-ADP-D-ribose + nicotinamide + L-lysyl-[protein]. Its function is as follows. NAD-dependent protein deacetylase which modulates the activities of several proteins which are inactive in their acetylated form. The sequence is that of NAD-dependent protein deacylase (cobB) from Desulfosudis oleivorans (strain DSM 6200 / JCM 39069 / Hxd3) (Desulfococcus oleovorans).